Reading from the N-terminus, the 124-residue chain is Ribonuclease pancreatic (124 aa).

Basic and acidic residues predominate over residues 1–13 (KESAAAKFERQHM). The segment at 1-23 (KESAAAKFERQHMDPSASSISSS) is disordered. 2 residues coordinate substrate: Lys7 and Arg10. The Proton acceptor role is filled by His12. 4 disulfide bridges follow: Cys26/Cys84, Cys40/Cys95, Cys58/Cys110, and Cys65/Cys72. An N-linked (GlcNAc...) asparagine glycan is attached at Asn34. Substrate-binding positions include 41 to 45 (KPVNT), Lys66, and Arg85. The active-site Proton donor is the His119.

It belongs to the pancreatic ribonuclease family. Monomer. Interacts with and forms tight 1:1 complexes with RNH1. Dimerization of two such complexes may occur. Interaction with RNH1 inhibits this protein. Pancreas.

The protein resides in the secreted. It catalyses the reaction an [RNA] containing cytidine + H2O = an [RNA]-3'-cytidine-3'-phosphate + a 5'-hydroxy-ribonucleotide-3'-[RNA].. The catalysed reaction is an [RNA] containing uridine + H2O = an [RNA]-3'-uridine-3'-phosphate + a 5'-hydroxy-ribonucleotide-3'-[RNA].. In terms of biological role, endonuclease that catalyzes the cleavage of RNA on the 3' side of pyrimidine nucleotides. Acts on single-stranded and double-stranded RNA. The sequence is that of Ribonuclease pancreatic (RNASE1) from Alces alces alces (European moose).